Consider the following 304-residue polypeptide: Oxygen-dependent coproporphyrinogen-III oxidase (304 aa).

Position 94 (Ser94) interacts with substrate. Residues His98 and His108 each contribute to the a divalent metal cation site. The Proton donor role is filled by His108. 110-112 is a substrate binding site; that stretch reads NVR. His147 and His177 together coordinate a divalent metal cation. Residues 242–277 are important for dimerization; that stretch reads YVEFNLVYDRGTLFGLQTGGRTESILMSMPPLVRWQ. 260–262 is a substrate binding site; the sequence is GGR.

The protein belongs to the aerobic coproporphyrinogen-III oxidase family. Homodimer. A divalent metal cation is required as a cofactor.

It is found in the cytoplasm. The catalysed reaction is coproporphyrinogen III + O2 + 2 H(+) = protoporphyrinogen IX + 2 CO2 + 2 H2O. Its pathway is porphyrin-containing compound metabolism; protoporphyrin-IX biosynthesis; protoporphyrinogen-IX from coproporphyrinogen-III (O2 route): step 1/1. Involved in the heme biosynthesis. Catalyzes the aerobic oxidative decarboxylation of propionate groups of rings A and B of coproporphyrinogen-III to yield the vinyl groups in protoporphyrinogen-IX. The polypeptide is Oxygen-dependent coproporphyrinogen-III oxidase (Shewanella amazonensis (strain ATCC BAA-1098 / SB2B)).